We begin with the raw amino-acid sequence, 419 residues long: Creatine kinase S-type, mitochondrial (419 aa).

A mitochondrion-targeting transit peptide spans 1-39 (MASTFSKLLTGRNASLLFATLGTGALTTGYLLNKQNVCA). Residues 40-64 (AAREQHKLFPPSADYPDLRKHNNCM) are cardiolipin-binding. Positions 46–132 (KLFPPSADYP…FDPVIKLRHN (87 aa)) constitute a Phosphagen kinase N-terminal domain. Residues 159–401 (YVLSSRVRTG…NYLVDCEKKL (243 aa)) form the Phosphagen kinase C-terminal domain. Residues 162–166 (SSRVR) and His225 each bind ATP. Residue Tyr255 is modified to Phosphotyrosine. Residues Arg270, Arg326, 354 to 359 (RGTGGV), and Asp369 contribute to the ATP site. The residue at position 356 (Thr356) is a Phosphothreonine.

Belongs to the ATP:guanido phosphotransferase family. As to quaternary structure, exists as an octamer composed of four CKMT2 homodimers.

The protein localises to the mitochondrion inner membrane. The catalysed reaction is creatine + ATP = N-phosphocreatine + ADP + H(+). Reversibly catalyzes the transfer of phosphate between ATP and various phosphogens (e.g. creatine phosphate). Creatine kinase isoenzymes play a central role in energy transduction in tissues with large, fluctuating energy demands, such as skeletal muscle, heart, brain and spermatozoa. In Bos taurus (Bovine), this protein is Creatine kinase S-type, mitochondrial (CKMT2).